The sequence spans 547 residues: Putative laccase-5 (547 aa).

The first 35 residues, 1–35 (MGTPRGLRNAGSSSSACRFLAAFAVLLALPTLTAG), serve as a signal peptide directing secretion. 2 consecutive Plastocyanin-like domains span residues 43–159 (NVQM…PKRG) and 170–323 (ELPP…YAPT). Residues asparagine 48 and asparagine 89 are each glycosylated (N-linked (GlcNAc...) asparagine). Cu cation contacts are provided by histidine 93, histidine 95, histidine 138, and histidine 140. 10 N-linked (GlcNAc...) asparagine glycosylation sites follow: asparagine 199, asparagine 215, asparagine 251, asparagine 311, asparagine 342, asparagine 349, asparagine 388, asparagine 395, asparagine 405, and asparagine 430. In terms of domain architecture, Plastocyanin-like 3 spans 408 to 531 (FVRPRVALLE…SMAWLVNDGP (124 aa)). Histidine 448, histidine 451, histidine 453, histidine 510, cysteine 511, histidine 512, and histidine 516 together coordinate Cu cation.

It belongs to the multicopper oxidase family. Cu cation serves as cofactor.

The protein resides in the secreted. It localises to the extracellular space. It is found in the apoplast. The catalysed reaction is 4 hydroquinone + O2 = 4 benzosemiquinone + 2 H2O. Its function is as follows. Lignin degradation and detoxification of lignin-derived products. The protein is Putative laccase-5 (LAC5) of Oryza sativa subsp. japonica (Rice).